A 164-amino-acid chain; its full sequence is UPF0251 protein MA_0157 (164 aa).

The disordered stretch occupies residues 91 to 124 (GDYRMPRGDGTGPAGQGPVGGGRSRGQGKGRGGR). Positions 99-115 (DGTGPAGQGPVGGGRSR) are enriched in gly residues.

Belongs to the UPF0251 family.

The sequence is that of UPF0251 protein MA_0157 from Methanosarcina acetivorans (strain ATCC 35395 / DSM 2834 / JCM 12185 / C2A).